Reading from the N-terminus, the 77-residue chain is Small ribosomal subunit protein bS16c (77 aa).

It belongs to the bacterial ribosomal protein bS16 family.

Its subcellular location is the plastid. The protein resides in the cyanelle. This Cyanophora paradoxa protein is Small ribosomal subunit protein bS16c.